Reading from the N-terminus, the 380-residue chain is Negative elongation factor E (380 aa).

Residues Gly7–Ser36 are a coiled coil. Residues Leu30–Gln43 are compositionally biased toward low complexity. Positions Leu30–Gln67 are disordered. Ser51 is modified (phosphoserine). Lys78 is covalently cross-linked (Glycyl lysine isopeptide (Lys-Gly) (interchain with G-Cter in SUMO1); alternate). A Glycyl lysine isopeptide (Lys-Gly) (interchain with G-Cter in SUMO2); alternate cross-link involves residue Lys78. The segment at Ala79–Pro258 is disordered. Lys82 is covalently cross-linked (Glycyl lysine isopeptide (Lys-Gly) (interchain with G-Cter in SUMO2)). A compositionally biased stretch (basic and acidic residues) spans Arg90–Lys101. Ser113 and Ser115 each carry phosphoserine. Position 122 is a polyADP-ribosyl glutamic acid (Glu122). 2 positions are modified to phosphoserine: Ser131 and Ser139. Glu151 carries the post-translational modification PolyADP-ribosyl glutamic acid. Ser165 carries the phosphoserine modification. The residue at position 172 (Glu172) is a PolyADP-ribosyl glutamic acid. Ser179 is subject to Phosphoserine. Phosphoserine; by CDK9 occurs at positions 181, 185, and 187. Tandem repeats lie at residues Arg184–Ser185, Arg186–Ser187, Arg188–Asp189, and Arg190–Ser191. Residues Arg184–Glu243 form a 30 X 2 AA approximate tandem repeats of R-[DSNE] region. Positions Arg186–Arg256 are enriched in basic and acidic residues. The residue at position 191 (Ser191) is a Phosphoserine; by CDK9. The stretch at His192–Glu193 is one 5; approximate repeat. Tandem repeats lie at residues Arg194–Asn195, Arg196–Asp197, Arg198–Asp199, Arg200–Asp201, Arg202–Glu203, Arg204–Asp205, Arg206–Asp207, Arg208–Asp209, Arg210–Asp211, Arg212–Asp213, Arg214–Glu215, Arg216–Asp217, Arg218–Asp219, Arg220–Asp221, Arg222–Asp223, Arg224–Asp225, Arg226–Asp227, Arg228–Glu229, Arg230–Asp231, Arg232–Asp233, Arg234–Glu235, Arg236–Asp237, Arg238–Asp239, Arg240–Asp241, and Arg242–Glu243. Phosphoserine occurs at positions 249 and 251. One can recognise an RRM domain in the interval Asn262 to Lys332. Phosphothreonine is present on residues Thr272 and Thr274. Phosphoserine is present on residues Ser281 and Ser353. Glu374 carries the post-translational modification PolyADP-ribosyl glutamic acid.

This sequence belongs to the RRM NELF-E family. The NELF complex is composed of NELFA, NELFB, NELFCD (isoform NELF-C or isoform NELF-D) and NELFE. Interacts with NELFB. As to quaternary structure, (Microbial infection) Binds to the HIV-1 TAR RNA which is located in the long terminal repeat (LTR) of HIV-1. Post-translationally, phosphorylated by the P-TEFb complex at sites next to its RNA recognition motif, promoting its release from chromatin. In terms of processing, sumoylated. Poly-ADP-ribosylated by PARP1, thereby preventing RNA-binding and relieving transcription pausing. Widely expressed. Expressed in heart, brain, lung, placenta, liver, skeletal muscle, kidney and pancreas.

The protein resides in the nucleus. Its subcellular location is the chromosome. Its function is as follows. Essential component of the NELF complex, a complex that negatively regulates the elongation of transcription by RNA polymerase II. The NELF complex, which acts via an association with the DSIF complex and causes transcriptional pausing, is counteracted by the P-TEFb kinase complex. Provides the strongest RNA binding activity of the NELF complex and may initially recruit the NELF complex to RNA. Functionally, (Microbial infection) The NELF complex is involved in HIV-1 latency possibly involving recruitment of PCF11 to paused RNA polymerase II. The sequence is that of Negative elongation factor E (NELFE) from Homo sapiens (Human).